The sequence spans 685 residues: MNHLGKTEVFLNRFALRPLNPEELRPWRLEVVLDPPPGREEVYPLLAQVARRAGGVTVRMGDGLASWSPPEVLVLEGTLARMGQTYAYRLYPKGRRPLDPKDPGERSVLSALARRLLQERLRRLEGVWVEGLAVYRREHARGPGWRVLGGAVLDLWVSDSGAFLLEVDPAYRILCEMSLEAWLAQGHPLPKRVRNAYDRRTWELLRLGEEDPKELPLPGGLSLLDYHASKGRLQGREGGRVAWVADPKDPRKPIPHLTGLLVPVLTLEDLHEEEGSLALSLPWEERRRRTREIASWIGRRLGLGTPEAVRAQAYRLSIPKLMGRRAVSKPADALRVGFYRAQETALALLRLDGAQGWPEFLRRALLRAFGASGASLRLHTLHAHPSQGLAFREALRKAKEEGVQAVLVLTPPMAWEDRNRLKALLLREGLPSQILNVPLREEERHRWENALLGLLAKAGLQVVALSGAYPAELAVGFDAGGRESFRFGGAACAVGGDGGHLLWTLPEAQAGERIPQEVVWDLLEETLWAFRRKAGRLPSRVLLLRDGRVPQDEFALALEALAREGIAYDLVSVRKSGGGRVYPVQGRLADGLYVPLEDKTFLLLTVHRDFRGTPRPLKLVHEAGDTPLEALAHQIFHLTRLYPASGFAFPRLPAPLHLADRLVKEVGRLGIRHLKEVDREKLFFV.

The N-terminal domain stretch occupies residues 1–99 (MNHLGKTEVF…LYPKGRRPLD (99 aa)). The tract at residues 100–176 (PKDPGERSVL…VDPAYRILCE (77 aa)) is linker L1. The 97-residue stretch at 169-265 (PAYRILCEMS…HLTGLLVPVL (97 aa)) folds into the PAZ domain. A linker L2 region spans residues 272–337 (EEEGSLALSL…SKPADALRVG (66 aa)). The tract at residues 338 to 463 (FYRAQETALA…LLAKAGLQVV (126 aa)) is mid domain. A PIWI domain region spans residues 464 to 685 (ALSGAYPAEL…EVDREKLFFV (222 aa)). Active-site residues include aspartate 478, glutamate 512, aspartate 546, and aspartate 660. Aspartate 478 serves as a coordination point for Mn(2+). The 165-residue stretch at 507–671 (EAQAGERIPQ…LVKEVGRLGI (165 aa)) folds into the Piwi domain. Mn(2+) is bound by residues aspartate 546, aspartate 660, and valine 685.

It belongs to the argonaute family. Long pAgo subfamily. Coimmunoprecipitates with a number of proteins involved in DNA replication or recombination including RepA (initiates replication), AddA/B (TT_C0638 and TT_C0639), ArgR, GyrA/B, HU (TT_C0984), PriA, Rad52 (TT_C1923), RecJ, SSB, TopA and UvrB. Most proteins remain associated with TtAgo after DNase treatment and associate with catalytically inactive protein. Mn(2+) is required as a cofactor.

Its function is as follows. A DNA-guided ssDNA endonuclease. Uses short ssDNA sequences as guides (gDNA, also called small interfering DNA, siDNA) to bind complementary DNA target strands, resulting in cleavage of the target DNA (tDNA). The cleavage site is 10 nucleotides (nt) downstream of the target residue base-paired with the 5'-end of the gDNA. Plays a role in completion of DNA replication, participates in decatenating replicated DNA and plasmid. In situ purifies with 5'-phosphorylated long DNA (about 1160 nt, maps to the whole chromosome and plasmid), 25-35 nt RNAs that map to the whole chromosome and 15-18 nt DNA that maps to the replication terminus region (ter) on the chromosome and plasmid. Most short DNA starts with dC. Has been shown to have guide sequence-independent dsDNase activity called 'chopping', which requires unstable DNA (high AT-content, multiple mismatches or low salt conditions), and could be used to generate gDNA. Preferentially binds tDNA with dC at its 3'-terminus. Has also been shown to have no detectable guide sequence-independent dsDNase activity. The latter study proposes TtAgo may acquire gDNA from nicked dsDNA, by binding to 5'-phosphorylated-dC nicks, then cleaving 10 nt away on the opposite strand; subsequently an exonuclease (maybe AddA-AddB helicase/nuclease) trims the ends to generate the gDNA. Involved in defense against invading mobile genetic elements. TtAgo interferes with plasmid DNA, stimulates expression of specific endogenous genes, including various CRISPR loci and at least part of the CRISPR adaptation machinery, but only when exogenous plasmid DNA is present. Upon purification from E.coli associates with gDNA 13-25 nt long with 5'-phosphorylated ends and with 10-150 nt RNA with 5'-OH. DNA corresponds to the expression plasmid rather than chromosomal DNA; 89% of gDNA starts with dC and 72% has dA in the second position. Endonucleolytically cleaves tDNA with 5'-phosphorylated gDNA but not 5'-phosphorylated gRNA; the active site is involved in processing or binding of ssDNA. Nicks or linearizes supercoiled plasmid target when it has the appropriate gDNA sequences, does not cleave linear tDNA. Positions 4 to 16 of the tDNA need to be base paired to the gDNA for efficient tDNA cleavage. Although the system can support single nucleotide insertions in either the gDNA or tDNA, in all cases cleavage activity is reduced, with a wide range of sequence- and position-specific effects. Functionally, first characterized as a DNA-guided RNA endonuclease. Uses gDNA to bind complementary RNA target strands, resulting in cleavage of the target RNA. The cleavage site is 10 nucleotides (nt) downstream of the target residue base-paired with the 5'-end of the guide DNA. In Thermus thermophilus (strain ATCC BAA-163 / DSM 7039 / HB27), this protein is Protein argonaute.